The following is a 72-amino-acid chain: U-poneritoxin(01)-Om7a (72 aa).

Positions 1-27 are cleaved as a signal peptide; the sequence is MKPSGLTFAFLVVFMMAIMYNSVQVTA. The propeptide occupies 28-45; the sequence is DADADAEAEALANALAEA.

Belongs to the formicidae venom precursor-01 superfamily. As to expression, expressed by the venom gland.

It localises to the secreted. Peptide with unknown function that does not resemble any other pilosulin-like peptide and appears to have a coiled coil structure. This chain is U-poneritoxin(01)-Om7a, found in Odontomachus monticola (Trap-jaw ant).